Here is a 418-residue protein sequence, read N- to C-terminus: Glutamyl-tRNA reductase (418 aa).

Substrate contacts are provided by residues 49 to 52 (TCNR), serine 109, 114 to 116 (EPQ), and glutamine 120. Cysteine 50 serves as the catalytic Nucleophile. NADP(+) is bound at residue 189–194 (GAGETI).

The protein belongs to the glutamyl-tRNA reductase family. As to quaternary structure, homodimer.

It catalyses the reaction (S)-4-amino-5-oxopentanoate + tRNA(Glu) + NADP(+) = L-glutamyl-tRNA(Glu) + NADPH + H(+). It participates in porphyrin-containing compound metabolism; protoporphyrin-IX biosynthesis; 5-aminolevulinate from L-glutamyl-tRNA(Glu): step 1/2. Catalyzes the NADPH-dependent reduction of glutamyl-tRNA(Glu) to glutamate 1-semialdehyde (GSA). The protein is Glutamyl-tRNA reductase of Shigella dysenteriae serotype 1 (strain Sd197).